The chain runs to 636 residues: Chaperone protein HtpG (636 aa).

Positions 1–344 (MTMSVETQKE…SNDLSLNVSR (344 aa)) are a; substrate-binding. The interval 345-561 (EILQKDPIID…EQDLGMQMRQ (217 aa)) is b. A c region spans residues 562-636 (ILEASGQKVP…LNKLLVELSV (75 aa)).

Belongs to the heat shock protein 90 family. As to quaternary structure, homodimer.

It localises to the cytoplasm. Its function is as follows. Molecular chaperone. Has ATPase activity. This Pseudomonas fluorescens (strain SBW25) protein is Chaperone protein HtpG.